A 144-amino-acid chain; its full sequence is Cytochrome c oxidase subunit 4 isoform 1, mitochondrial (144 aa).

Topologically, residues 1–73 (SVVKSEDYAL…SFAEMNRGSN (73 aa)) are mitochondrial matrix. The residue at position 4 (Lys-4) is an N6-acetyllysine; alternate. N6-succinyllysine; alternate is present on Lys-4. Residues Ser-31 and Ser-33 each carry the phosphoserine modification. Lys-35 is subject to N6-acetyllysine; alternate. Lys-35 carries the post-translational modification N6-succinyllysine; alternate. Lys-42 carries the post-translational modification N6-acetyllysine. Residues 74–99 (EWKTVVGAAMFFIGFTAILIILEKRY) form a helical membrane-spanning segment. Topologically, residues 100-144 (VYGPLPHTFDKEWVAMQTKRMLDLKVNPVDGLASKWDYDKKEWKK) are mitochondrial intermembrane.

This sequence belongs to the cytochrome c oxidase IV family. As to quaternary structure, component of the cytochrome c oxidase (complex IV, CIV), a multisubunit enzyme composed of 14 subunits. The complex is composed of a catalytic core of 3 subunits MT-CO1, MT-CO2 and MT-CO3, encoded in the mitochondrial DNA, and 11 supernumerary subunits COX4I, COX5A, COX5B, COX6A, COX6B, COX6C, COX7A, COX7B, COX7C, COX8 and NDUFA4, which are encoded in the nuclear genome. The complex exists as a monomer or a dimer and forms supercomplexes (SCs) in the inner mitochondrial membrane with NADH-ubiquinone oxidoreductase (complex I, CI) and ubiquinol-cytochrome c oxidoreductase (cytochrome b-c1 complex, complex III, CIII), resulting in different assemblies (supercomplex SCI(1)III(2)IV(1) and megacomplex MCI(2)III(2)IV(2)). Interacts with PHB2; the interaction decreases in absence of SPHK2. Interacts with AFG1L. Interacts with ABCB7; this interaction allows the regulation of cellular iron homeostasis and cellular reactive oxygen species (ROS) levels in cardiomyocytes. Interacts with FLVCR2; this interaction occurs in the absence of heme and is disrupted upon heme binding. Interacts with IRGC.

It is found in the mitochondrion inner membrane. It functions in the pathway energy metabolism; oxidative phosphorylation. Component of the cytochrome c oxidase, the last enzyme in the mitochondrial electron transport chain which drives oxidative phosphorylation. The respiratory chain contains 3 multisubunit complexes succinate dehydrogenase (complex II, CII), ubiquinol-cytochrome c oxidoreductase (cytochrome b-c1 complex, complex III, CIII) and cytochrome c oxidase (complex IV, CIV), that cooperate to transfer electrons derived from NADH and succinate to molecular oxygen, creating an electrochemical gradient over the inner membrane that drives transmembrane transport and the ATP synthase. Cytochrome c oxidase is the component of the respiratory chain that catalyzes the reduction of oxygen to water. Electrons originating from reduced cytochrome c in the intermembrane space (IMS) are transferred via the dinuclear copper A center (CU(A)) of subunit 2 and heme A of subunit 1 to the active site in subunit 1, a binuclear center (BNC) formed by heme A3 and copper B (CU(B)). The BNC reduces molecular oxygen to 2 water molecules using 4 electrons from cytochrome c in the IMS and 4 protons from the mitochondrial matrix. The chain is Cytochrome c oxidase subunit 4 isoform 1, mitochondrial (COX4I1) from Aotus azarae (Azara's night monkey).